A 441-amino-acid chain; its full sequence is Zinc finger and BTB domain-containing protein 8A (441 aa).

One can recognise a BTB domain in the interval 24–92 (CDCSILVEGK…VYSGKLSLTG (69 aa)). The disordered stretch occupies residues 135–248 (LSDKDTGSNG…HVSQSEEQVQ (114 aa)). Residues Ser161 and Ser167 each carry the phosphoserine modification. Glycyl lysine isopeptide (Lys-Gly) (interchain with G-Cter in SUMO2) cross-links involve residues Lys178, Lys182, and Lys199. Composition is skewed to basic and acidic residues over residues 198-208 (AKHEQRKDPIK) and 227-242 (GKGDARTSDSGHHVSQ). 2 consecutive C2H2-type zinc fingers follow at residues 282–304 (FKCPYCTHVVKRKADLKRHLRCH) and 310–333 (YPCQACGKRFSRLDHLSSHFRTIH). Residue Lys437 forms a Glycyl lysine isopeptide (Lys-Gly) (interchain with G-Cter in SUMO2) linkage.

It is found in the nucleus. Functionally, may be involved in transcriptional regulation. This chain is Zinc finger and BTB domain-containing protein 8A (Zbtb8a), found in Rattus norvegicus (Rat).